A 126-amino-acid polypeptide reads, in one-letter code: Pancreatic polypeptide prohormone (126 aa).

The signal sequence occupies residues 1–26 (MTATRCCLWLLLLGTCMALLLPEAWG). Tyrosine 62 is subject to Tyrosine amide. Residues 77–126 (RQSHAAAPGGSHRHPPAGLPAAKGGTGVSGSPPKPWDCLPCRAHSLPSQS) are disordered.

Belongs to the NPY family. In terms of processing, no icosapeptide-like peptide is cleaved from the C-terminal.

Its subcellular location is the secreted. Functionally, hormone secreted by pancreatic cells that acts as a regulator of pancreatic and gastrointestinal functions probably by signaling through the G protein-coupled receptor NPY4R2. In Cavia porcellus (Guinea pig), this protein is Pancreatic polypeptide prohormone (PPY).